Consider the following 522-residue polypeptide: DEP domain-containing protein 7 (522 aa).

The 93-residue stretch at 46 to 138 (LYTQVEVKKR…SSCSLYRFLN (93 aa)) folds into the DEP domain.

Belongs to the DEPDC7 family.

The chain is DEP domain-containing protein 7 (depdc7) from Xenopus laevis (African clawed frog).